The sequence spans 314 residues: Ribosomal RNA small subunit methyltransferase H (314 aa).

S-adenosyl-L-methionine contacts are provided by residues 34–36 (GGH), aspartate 53, phenylalanine 82, aspartate 103, and glutamine 110.

This sequence belongs to the methyltransferase superfamily. RsmH family.

It localises to the cytoplasm. It catalyses the reaction cytidine(1402) in 16S rRNA + S-adenosyl-L-methionine = N(4)-methylcytidine(1402) in 16S rRNA + S-adenosyl-L-homocysteine + H(+). Its function is as follows. Specifically methylates the N4 position of cytidine in position 1402 (C1402) of 16S rRNA. This is Ribosomal RNA small subunit methyltransferase H from Levilactobacillus brevis (strain ATCC 367 / BCRC 12310 / CIP 105137 / JCM 1170 / LMG 11437 / NCIMB 947 / NCTC 947) (Lactobacillus brevis).